A 736-amino-acid polypeptide reads, in one-letter code: DEAD-box ATP-dependent RNA helicase 21 (736 aa).

Residues 14 to 38 adopt a coiled-coil conformation; sequence LTREEREKLALERRQAAVTDQRRSA. The span at 25-38 shows a compositional bias: basic and acidic residues; it reads ERRQAAVTDQRRSA. Disordered regions lie at residues 25–178 and 231–263; these read ERRQ…PKKR and KVAA…DKKE. Residues 46–58 are compositionally biased toward pro residues; the sequence is PRPPPPPPPPLSN. Basic and acidic residues-rich tracts occupy residues 64–166 and 231–252; these read SSSH…DAIK and KVAA…GLDD. Residues 137–167 adopt a coiled-coil conformation; it reads DRDRERGDREKDRLEKMAEREREKELDAIKE. Positions 315 to 343 match the Q motif motif; it reads RKWSESKLGTELLRAVEKAGYKEPSPIQM. A Helicase ATP-binding domain is found at 346-541; sequence IPLGLQQRDV…RKYLRNPVVV (196 aa). 359–366 provides a ligand contact to ATP; sequence AETGSGKT. Positions 472–475 match the DEAD box motif; it reads DEAD. The Helicase C-terminal domain occupies 568–712; the sequence is RLQKILTDLG…PVPPELARHE (145 aa). A disordered region spans residues 704 to 736; that stretch reads VPPELARHEASKFKPGSVPDRPPRRNDTVYATH.

This sequence belongs to the DEAD box helicase family. DDX23/PRP28 subfamily.

The protein resides in the cytoplasm. The protein localises to the nucleus. The catalysed reaction is ATP + H2O = ADP + phosphate + H(+). Functionally, ATP-dependent RNA helicase involved in mRNA splicing. May destabilize the U1/5'-splice site duplex to permit an effective competition for the 5'-splice site by the U6 snRNA, resulting in the switch between U1 and U6 at the 5'-splice site. May also act to unwind the U4/U6 base-pairing interaction in the U4/U6/U5 snRNP, facilitating the first covalent step of splicing. The protein is DEAD-box ATP-dependent RNA helicase 21 of Oryza sativa subsp. japonica (Rice).